We begin with the raw amino-acid sequence, 114 residues long: DNA-binding protein Mbur_0117 (114 aa).

Residues Glu-14–Ala-37 are disordered. A compositionally biased stretch (low complexity) spans Gln-16–Ala-35.

This sequence belongs to the PDCD5 family.

In Methanococcoides burtonii (strain DSM 6242 / NBRC 107633 / OCM 468 / ACE-M), this protein is DNA-binding protein Mbur_0117.